The following is a 507-amino-acid chain: ATP synthase subunit alpha (507 aa).

An ATP-binding site is contributed by 170–177; that stretch reads GDRQTGKT.

It belongs to the ATPase alpha/beta chains family. F-type ATPases have 2 components, CF(1) - the catalytic core - and CF(0) - the membrane proton channel. CF(1) has five subunits: alpha(3), beta(3), gamma(1), delta(1), epsilon(1). CF(0) has three main subunits: a(1), b(2) and c(9-12). The alpha and beta chains form an alternating ring which encloses part of the gamma chain. CF(1) is attached to CF(0) by a central stalk formed by the gamma and epsilon chains, while a peripheral stalk is formed by the delta and b chains.

It localises to the cell inner membrane. The enzyme catalyses ATP + H2O + 4 H(+)(in) = ADP + phosphate + 5 H(+)(out). Functionally, produces ATP from ADP in the presence of a proton gradient across the membrane. The alpha chain is a regulatory subunit. The sequence is that of ATP synthase subunit alpha from Thermosipho melanesiensis (strain DSM 12029 / CIP 104789 / BI429).